The sequence spans 102 residues: RNA-binding protein Hfq (102 aa).

Positions 9-68 (DPFLNALRRERVPVSIYLVNGIKLQGQIESFDQFVILLKNTVSQMVYKHAISTVVPSRPV) constitute a Sm domain. A disordered region spans residues 63-102 (VPSRPVSHHSNNASGGTSSNYHHGSSAQNTSAQQDSEETE). The segment covering 70-96 (HHSNNASGGTSSNYHHGSSAQNTSAQQ) has biased composition (polar residues).

The protein belongs to the Hfq family. Homohexamer.

In terms of biological role, RNA chaperone that binds small regulatory RNA (sRNAs) and mRNAs to facilitate mRNA translational regulation in response to envelope stress, environmental stress and changes in metabolite concentrations. Also binds with high specificity to tRNAs. This Shigella boydii serotype 18 (strain CDC 3083-94 / BS512) protein is RNA-binding protein Hfq.